The sequence spans 340 residues: Mitochondrial import receptor subunit TOM40 homolog 2 (340 aa).

Residues 1–37 (MGNVMASTADAESSRGRGHLSAGLRLPEAPQYSGGVP) form a disordered region.

The protein belongs to the Tom40 family. In terms of assembly, forms part of the preprotein translocase of the outer mitochondrial membrane (TOM complex). Interacts with mitochondrial targeting sequences. In terms of tissue distribution, only expressed in the male germline, detected in primary spermatocytes as well as post-meiotic stages. Not detected in stem cells and spermatogonia near the tip of the testis.

The protein localises to the mitochondrion outer membrane. Functionally, channel-forming protein essential for import of protein precursors into mitochondria. The sequence is that of Mitochondrial import receptor subunit TOM40 homolog 2 from Drosophila melanogaster (Fruit fly).